Consider the following 116-residue polypeptide: Dynein light chain Tctex-type 3 (116 aa).

Residue Y4 is modified to 3'-nitrotyrosine.

This sequence belongs to the dynein light chain Tctex-type family. Homodimer. The cytoplasmic dynein 1 complex consists of two catalytic heavy chains (HCs) and a number of non-catalytic subunits presented by intermediate chains (ICs), light intermediate chains (LICs) and light chains (LCs); the composition seems to vary in respect to the IC, LIC and LC composition. The heavy chain homodimer serves as a scaffold for the probable homodimeric assembly of the respective non-catalytic subunits. The ICs and LICs bind directly to the HC dimer and the LCs assemble on the IC dimer. DYNLT1 and DYNLT3 compete for association with dynein IC (DYNC1I1 or DYNC1I2). Self-associates. Interacts with DYNC1I1 and DYNC1I2. Interacts with BUB3. Interacts with SATB1 in nucleus to form complex with matrix attachment regions (MARs) of DNA.

Its subcellular location is the nucleus. It localises to the cytoplasm. The protein localises to the cytoskeleton. The protein resides in the chromosome. It is found in the centromere. Its subcellular location is the kinetochore. In terms of biological role, acts as one of several non-catalytic accessory components of the cytoplasmic dynein 1 complex that are thought to be involved in linking dynein to cargos and to adapter proteins that regulate dynein function. Cytoplasmic dynein 1 acts as a motor for the intracellular retrograde motility of vesicles and organelles along microtubules. Probably binds BUB3 as part of transport cargo. Required for the efficient progression through mitosis. This is Dynein light chain Tctex-type 3 (DYNLT3) from Ovis aries (Sheep).